A 537-amino-acid polypeptide reads, in one-letter code: Carboxypeptidase Y homolog A (537 aa).

The first 17 residues, 1–17 (MRLSTSALVLGAASSAV), serve as a signal peptide directing secretion. A propeptide spanning residues 18–124 (AFDQKVLGDL…RLDNYNLRAK (107 aa)) is cleaved from the precursor. 5 disulfide bridges follow: cysteine 178–cysteine 418, cysteine 312–cysteine 326, cysteine 336–cysteine 359, cysteine 343–cysteine 352, and cysteine 381–cysteine 388. The N-linked (GlcNAc...) asparagine glycan is linked to asparagine 209. Serine 265 is an active-site residue. The active site involves aspartate 457. Asparagine 503 is a glycosylation site (N-linked (GlcNAc...) asparagine). Residue histidine 514 is part of the active site.

Belongs to the peptidase S10 family.

Its subcellular location is the vacuole. It catalyses the reaction Release of a C-terminal amino acid with broad specificity.. Vacuolar carboxypeptidase involved in degradation of small peptides. Digests preferentially peptides containing an aliphatic or hydrophobic residue in P1' position, as well as methionine, leucine or phenylalanine in P1 position of ester substrate. The sequence is that of Carboxypeptidase Y homolog A (CPYA) from Fusarium vanettenii (strain ATCC MYA-4622 / CBS 123669 / FGSC 9596 / NRRL 45880 / 77-13-4) (Fusarium solani subsp. pisi).